The primary structure comprises 182 residues: ATP-dependent protease subunit HslV (182 aa).

Thr-12 is a catalytic residue. Positions 167, 170, and 173 each coordinate Na(+).

Belongs to the peptidase T1B family. HslV subfamily. As to quaternary structure, a double ring-shaped homohexamer of HslV is capped on each side by a ring-shaped HslU homohexamer. The assembly of the HslU/HslV complex is dependent on binding of ATP.

The protein localises to the cytoplasm. The catalysed reaction is ATP-dependent cleavage of peptide bonds with broad specificity.. With respect to regulation, allosterically activated by HslU binding. In terms of biological role, protease subunit of a proteasome-like degradation complex believed to be a general protein degrading machinery. This Chlorobium luteolum (strain DSM 273 / BCRC 81028 / 2530) (Pelodictyon luteolum) protein is ATP-dependent protease subunit HslV.